A 180-amino-acid chain; its full sequence is Crossover junction endodeoxyribonuclease RuvC (180 aa).

Catalysis depends on residues aspartate 7, glutamate 66, and aspartate 138. Residues aspartate 7, glutamate 66, and aspartate 138 each coordinate Mg(2+).

It belongs to the RuvC family. Homodimer which binds Holliday junction (HJ) DNA. The HJ becomes 2-fold symmetrical on binding to RuvC with unstacked arms; it has a different conformation from HJ DNA in complex with RuvA. In the full resolvosome a probable DNA-RuvA(4)-RuvB(12)-RuvC(2) complex forms which resolves the HJ. Requires Mg(2+) as cofactor.

The protein resides in the cytoplasm. The catalysed reaction is Endonucleolytic cleavage at a junction such as a reciprocal single-stranded crossover between two homologous DNA duplexes (Holliday junction).. In terms of biological role, the RuvA-RuvB-RuvC complex processes Holliday junction (HJ) DNA during genetic recombination and DNA repair. Endonuclease that resolves HJ intermediates. Cleaves cruciform DNA by making single-stranded nicks across the HJ at symmetrical positions within the homologous arms, yielding a 5'-phosphate and a 3'-hydroxyl group; requires a central core of homology in the junction. The consensus cleavage sequence is 5'-(A/T)TT(C/G)-3'. Cleavage occurs on the 3'-side of the TT dinucleotide at the point of strand exchange. HJ branch migration catalyzed by RuvA-RuvB allows RuvC to scan DNA until it finds its consensus sequence, where it cleaves and resolves the cruciform DNA. This chain is Crossover junction endodeoxyribonuclease RuvC, found in Burkholderia pseudomallei (strain 668).